The following is a 423-amino-acid chain: MAKTIQAIRGMNDCATTESPLWQWVESNVRNVLASYGYSEVRMPIVESTPLFARAIGEVTDVVSKEMYTFWDNDEQLTLRPEGTAGCVRAAIQHGWIYNNEQRLWYMGPMFRHERPQKGRYRQFHQAGVEVFGIANPEIDAELILLTARLWQALGIEQHLSLQLNSIGSLAARANYRAALVDFLANHTALMNDEEKERLVKNPLRILDTKNQALQAVLNDAPKLLDYLDEESRQHFAQLCQLLDAMGIRYEVNPKLVRGLDYYNKTVFEWVTSALGSQGTVCGGGRYDGLVEQLGGHATQGVGFAIGLERLVLLVQEVNKTMSLPKAVDIYLVYAGDNTTLKAFQIAEQIRNALPQLRVMTHCSGGNFKKQFKRADKVEAKIALVIGESELATQTIVLKELQNSSEQISIDQADLLAELSKRF.

Belongs to the class-II aminoacyl-tRNA synthetase family. In terms of assembly, homodimer.

The protein resides in the cytoplasm. It carries out the reaction tRNA(His) + L-histidine + ATP = L-histidyl-tRNA(His) + AMP + diphosphate + H(+). This chain is Histidine--tRNA ligase, found in Haemophilus ducreyi (strain 35000HP / ATCC 700724).